Consider the following 271-residue polypeptide: DNA repair protein RecO (271 aa).

Belongs to the RecO family.

Functionally, involved in DNA repair and RecF pathway recombination. The chain is DNA repair protein RecO from Rhodococcus erythropolis (strain PR4 / NBRC 100887).